Consider the following 1161-residue polypeptide: MPSQVSRGLDTTNMLPISEEQQLQQQQQQQQLEQLHHPQIPEIPIPDLEQVETQVGDGSLWTALYDYDAQGEDELTLRRGEIVVVLSTDSEVSGDVGWWTGKIGDKVGVFPKDFVTDEDPLQLNVSSAIGDIQPHEIEYNELDIKEVIGSGGFCKVHRGYYDGEEVAIKIAHQTGEDDMQRMRDNVLQEAKLFWALKHENIAALRGVCLNTKLCLVMEYARGGSLNRILAGKIPPDVLVNWAIQIARGMNYLHNEAPMSIIHRDLKSSNVLIYEAIEGNHLQQKTLKITDFGLAREMYNTQRMSAAGTYAWMPPEVISVSTYSKFSDVWSYGVLLWELITGETPYKGFDPLSVAYGVAVNTLTLPIPKTCPETWGALMKSCWQTDPHKRPGFKEILKQLESIACSKFTLTPQESFHYMQECWRKEIAGVLHDLREKEKELRNKEEQLLRVQNEQREKANLLKIREQNLRERERVLIERELVMLQPVPSKRKHKKGKKNKPLQISLPTGFRHTITAVRDKAEQPGSPSFSGLRIVALTDGHKGKTWGPSTMHQRERSLLPSQLSGGQPEWPAQTSTHSSFSKSAPNLDKKQQQQNQQQVASLTPPPGLGILGGSGGAGGTPATPLLYPGIPIILTRPNNNNIGNCKAITTTITTTTTTTTNNNNNNNNSISANNNNQLNNISTINSNNNNNQTNLTSQPNTIIVLQNGRNNSNSSTTSQSPAKIYHRARSQEYGLDHPLAYQPPPLYLVTDDSSETDTVASPTGCFHFLKSGNSSAASGAVHLHRFGGSLGNSPAVGRKKHSLDSSSHHPPANGSNSFALPNQLTLPSEDNNTYDHAFYRDVIKKMSMASSERVNSKSSGDLTMYNSSTPLTARDCDDAEEAFEGGRFQRNFSGSQFPRHCFFTRQEEEGEAEDEDAVAAEVDTADADADDECQVPASQMRQNSTTSRKSSVTFQSVSFEEPDFVATPRTTARSDLYTSSASISFATYRSASPSLSSSSTTASASPSIASTEAVNGYHMQENSILNTRRMQDVQPHPDVIKLRAQEQRQQTKNQKKQRPKHITKSKSVEAPVEGQHHEHDDHNDPQHQHHSAGSSKIRALFNLFTRSRKKYSKLAEHNMVGGPEFCAIDPYQTDLAMGGSSRSLKRKGKKPQTQSCEQLERC.

Positions G56–P120 constitute an SH3 domain. Residues L142–I402 form the Protein kinase domain. ATP contacts are provided by residues I148 to V156 and K169. D264 functions as the Proton acceptor in the catalytic mechanism. A Phosphothreonine; by autocatalysis modification is found at T300. Residue S304 is modified to Phosphoserine; by autocatalysis. 2 leucine-zipper regions span residues I426–L447 and L461–M482. Phosphoserine is present on residues S525 and S560. 2 disordered regions span residues S560–G615 and T658–N678. Polar residues predominate over residues A571–A583. The segment covering Q591–L601 has biased composition (low complexity). Phosphoserine occurs at positions 685, 773, and 792. Positions G790–N830 are disordered. Positions N812–N830 are enriched in polar residues. Residue T862 is modified to Phosphothreonine. 3 disordered regions span residues R988–N1014, E1045–S1093, and G1137–C1161. The segment covering S989–T1010 has biased composition (low complexity). S993 carries the post-translational modification Phosphoserine. Residues N1052–K1063 are compositionally biased toward basic residues. Positions G1073 to H1086 are enriched in basic and acidic residues. The span at P1150–C1161 shows a compositional bias: polar residues.

Belongs to the protein kinase superfamily. STE Ser/Thr protein kinase family. MAP kinase kinase kinase subfamily. Homodimer. Mg(2+) is required as a cofactor. Post-translationally, autophosphorylation on serine and threonine residues within the activation loop plays a role in enzyme activation. Expressed both maternally and zygotically. Expressed uniformly in large quantities in the early embryo (stages 1-4). In the late embryo, expression is ubiquitous, but expression levels are dramatically reduced. Expressed in the adult head and thorax, and in S2 cells.

The catalysed reaction is L-seryl-[protein] + ATP = O-phospho-L-seryl-[protein] + ADP + H(+). It carries out the reaction L-threonyl-[protein] + ATP = O-phospho-L-threonyl-[protein] + ADP + H(+). With respect to regulation, homodimerization via the leucine zipper domains is required for autophosphorylation and subsequent activation. Activated by C6-ceramide. Functionally, activates the JUN N-terminal pathway during dorsal closure. The chain is Mitogen-activated protein kinase kinase kinase from Drosophila melanogaster (Fruit fly).